The primary structure comprises 1229 residues: Chitin synthase 4 (1229 aa).

Residues 1–196 (MSLPERPGAK…IVKEGKRKEK (196 aa)) form a disordered region. Over 1–202 (MSLPERPGAK…RKEKIPEQLR (202 aa)) the chain is Cytoplasmic. Basic residues predominate over residues 18-27 (SYRKSPSRRN). Over residues 43–66 (GQHQRGPSVNSFAETIRSPNSNIE) the composition is skewed to polar residues. A compositionally biased stretch (basic and acidic residues) spans 92 to 105 (IRPERNRIDRDHPN). Over residues 137-150 (SGPPSGSNSASGSG) the composition is skewed to low complexity. Composition is skewed to basic and acidic residues over residues 164–177 (SGRE…DNTR) and 187–196 (IVKEGKRKEK). The helical transmembrane segment at 203–223 (PPSAWNVYCAVITFWSPDFIM) threads the bilayer. The Extracellular portion of the chain corresponds to 224–240 (KCCGMPAKAQRRAWREK). A helical membrane pass occupies residues 241-261 (IGLISLILIIMGVVGFLTFGF). Residues 262 to 495 (NQAVCGGPVL…IKVGTVDTDT (234 aa)) lie on the Cytoplasmic side of the membrane. The chain crosses the membrane as a helical span at residues 496–516 (VGCIAAKVVLYVSLALILSVV). The Extracellular segment spans residues 517 to 1054 (GARFTLALIF…LCGTFCFSMQ (538 aa)). 2 disordered regions span residues 539 to 589 (TSQT…RSSF) and 601 to 648 (GAER…DPYA). Over residues 568–581 (GDVGSSVAGASSSD) the composition is skewed to low complexity. Residues asparagine 608, asparagine 635, and asparagine 1030 are each glycosylated (N-linked (GlcNAc...) asparagine). Residues 608–648 (NKSMPTTMASQASGGYMGPSSTAYRETNESRTSFLKSDPYA) show a composition bias toward polar residues. The helical transmembrane segment at 1055 to 1075 (FVIFIELIGTLVLPAAIAFTF) threads the bilayer. Residues 1076–1088 (YVVIISIINQPPQ) are Cytoplasmic-facing. The helical transmembrane segment at 1089–1109 (IIPLVLLGLILGLPAILIIIT) threads the bilayer. Over 1110–1114 (AHSWS) the chain is Extracellular. The chain crosses the membrane as a helical span at residues 1115–1135 (YVLWMLIYLLSLPVWNFVLPA). Topologically, residues 1136–1229 (YAFWKFDDFS…QQYDEYYSDA (94 aa)) are cytoplasmic. The tract at residues 1210–1229 (WASAPPHHHQQQYDEYYSDA) is disordered.

It belongs to the chitin synthase family. Class IV subfamily.

It localises to the cell membrane. It carries out the reaction [(1-&gt;4)-N-acetyl-beta-D-glucosaminyl](n) + UDP-N-acetyl-alpha-D-glucosamine = [(1-&gt;4)-N-acetyl-beta-D-glucosaminyl](n+1) + UDP + H(+). Its function is as follows. Polymerizes chitin, a structural polymer of the cell wall and septum, by transferring the sugar moiety of UDP-GlcNAc to the non-reducing end of the growing chitin polymer. Might function as a negative regulator on expression of other CHS genes. The chain is Chitin synthase 4 from Pyricularia oryzae (strain 70-15 / ATCC MYA-4617 / FGSC 8958) (Rice blast fungus).